Here is a 93-residue protein sequence, read N- to C-terminus: uncharacterized protein (93 aa).

The signal sequence occupies residues 1–22 (MSIPNLSSVTQLLSIATGLVST). Asn5 is a glycosylation site (N-linked (GlcNAc...) asparagine; by host).

This is an uncharacterized protein from Invertebrate iridescent virus 6 (IIV-6).